Consider the following 139-residue polypeptide: Putative pre-16S rRNA nuclease (139 aa).

It belongs to the YqgF nuclease family.

The protein localises to the cytoplasm. Could be a nuclease involved in processing of the 5'-end of pre-16S rRNA. The protein is Putative pre-16S rRNA nuclease of Dictyoglomus thermophilum (strain ATCC 35947 / DSM 3960 / H-6-12).